A 305-amino-acid polypeptide reads, in one-letter code: GTPase Era (305 aa).

Residues 11 to 181 (RSGFVSFVGR…IKVMTDLLPE (171 aa)) enclose the Era-type G domain. Positions 19–26 (GRPNTGKS) are G1. 19–26 (GRPNTGKS) lines the GTP pocket. The interval 45 to 49 (ETTRH) is G2. Positions 66 to 69 (DTPG) are G3. Residues 66–70 (DTPGL) and 130–133 (TKAD) contribute to the GTP site. The tract at residues 130–133 (TKAD) is G4. Residues 160-162 (VSS) are G5. One can recognise a KH type-2 domain in the interval 212 to 291 (LKNELPHSVA…FLDLRIKVLK (80 aa)).

The protein belongs to the TRAFAC class TrmE-Era-EngA-EngB-Septin-like GTPase superfamily. Era GTPase family. Monomer.

The protein resides in the cytoplasm. It localises to the cell membrane. Its function is as follows. An essential GTPase that binds both GDP and GTP, with rapid nucleotide exchange. Plays a role in 16S rRNA processing and 30S ribosomal subunit biogenesis and possibly also in cell cycle regulation and energy metabolism. This chain is GTPase Era, found in Corynebacterium glutamicum (strain ATCC 13032 / DSM 20300 / JCM 1318 / BCRC 11384 / CCUG 27702 / LMG 3730 / NBRC 12168 / NCIMB 10025 / NRRL B-2784 / 534).